Consider the following 381-residue polypeptide: Prolargin (381 aa).

The first 21 residues, 1-21, serve as a signal peptide directing secretion; that stretch reads MRSSLCWLLTLLLILATAAQG. A disordered region spans residues 19 to 65; that stretch reads AQGQPTRRPRPRPRPRPRPRLRPTPSFPQPDEPTEPTDLPPPLPPGP. The span at 25–39 shows a compositional bias: basic residues; it reads RRPRPRPRPRPRPRL. The segment covering 56–65 has biased composition (pro residues); the sequence is DLPPPLPPGP. LRR repeat units follow at residues 94 to 113, 114 to 137, 138 to 161, 162 to 182, 183 to 206, 207 to 232, 233 to 253, 254 to 277, 278 to 302, 303 to 322, 323 to 361, and 362 to 381; these read RKVP…NNFI, TELP…NNRI, RKVD…KNQL, EEVP…QNQI, SRIP…HNKL, SDGV…HNTL, RKMP…SNRI, EAIP…YNQL, SDRG…HNRI, SSVP…NNSI, EKIN…GNYL, and KPPI…SVVI. N-linked (GlcNAc...) asparagine glycosylation occurs at asparagine 123. Asparagine 288, asparagine 319, and asparagine 326 each carry an N-linked (GlcNAc...) asparagine glycan. Cysteines 331 and 372 form a disulfide.

It belongs to the small leucine-rich proteoglycan (SLRP) family. SLRP class II subfamily. Binds the basement membrane heparan sulfate proteoglycan perlecan and triple helical collagens type I and type II. Glycosylated; contains heparan sulfate.

It localises to the secreted. The protein localises to the extracellular space. It is found in the extracellular matrix. In terms of biological role, may anchor basement membranes to the underlying connective tissue. The sequence is that of Prolargin (PRELP) from Bos taurus (Bovine).